The following is a 629-amino-acid chain: MQTYDAGTFDVIVVGAGHAGVEAGLASGRMGAKTLMLTINLDMVAFMPCNPSVGGPAKGVVVREIDALGGEMGRNTDKTYIQMRMLNTGKGPAVRALRAQADKWDYQHEMKHTIEKEENITLRQGLVDRLVIEDGVCKGVITNSGAIYYAKTVVITTGTFSRGEIIVGELRYSSGPNNQQPSVKLSEHLEELGFELRRFKTGTPPRVKSSTIDYSKTEEQPGDDHPRAFSFDTVEMMLEQLPCWLTYTNETTHEIIQANLHRSPMFTATKKGTGARYCPSIEDKIVRFSDKPRHQIFLEPEGKNTEEVYVQGLSTSLPEEVQREMLRTIPGLENVEMMRVGYAIEYDAVMPDQLWPSLETKLVEGLFTAGQINGTSGYEEAAGQGLMAGINAARKVFEKEPVILGRDQAYIGVLIDDLVTKGTEEPYRLLTSRAEYRLLLRHDNADLRLTEIGHEIGLISDERYERFLAKQRAIEAEKERLQKTRIKPTAEVQAMLKEIGSGELKDGILAADLLRRPEITYDKIAQIVSRETFVTDEIAEQVEIQIKYEGYIQKSNLQVEKMKRMEDKKIPENIDYDAISGLATEALEKLKKIEPLSIAQASRISGVNPADISILLVYIEQGKIAKVSK.

Residues 15-20 (GAGHAG), Val-127, and Ser-182 each bind FAD. Residues 203–226 (TPPRVKSSTIDYSKTEEQPGDDHP) form a disordered region. Positions 215–226 (SKTEEQPGDDHP) are enriched in basic and acidic residues. NAD(+) is bound at residue 274-288 (GARYCPSIEDKIVRF). FAD is bound at residue Gln-371.

The protein belongs to the MnmG family. Homodimer. Heterotetramer of two MnmE and two MnmG subunits. FAD serves as cofactor.

The protein localises to the cytoplasm. Functionally, NAD-binding protein involved in the addition of a carboxymethylaminomethyl (cmnm) group at the wobble position (U34) of certain tRNAs, forming tRNA-cmnm(5)s(2)U34. This is tRNA uridine 5-carboxymethylaminomethyl modification enzyme MnmG from Listeria innocua serovar 6a (strain ATCC BAA-680 / CLIP 11262).